The following is a 557-amino-acid chain: Urocanate hydratase (557 aa).

Residues 1-20 form a disordered region; sequence MSNPRHNEREVRSPRGDELN. Residues 52 to 53, Q130, 176 to 178, E196, R201, 242 to 243, 263 to 267, 273 to 274, and Y322 each bind NAD(+); these read GG, GMG, NA, QTSAH, and YL. C410 is an active-site residue. Residue G492 coordinates NAD(+).

Belongs to the urocanase family. The cofactor is NAD(+).

Its subcellular location is the cytoplasm. It catalyses the reaction 4-imidazolone-5-propanoate = trans-urocanate + H2O. The protein operates within amino-acid degradation; L-histidine degradation into L-glutamate; N-formimidoyl-L-glutamate from L-histidine: step 2/3. Catalyzes the conversion of urocanate to 4-imidazolone-5-propionate. The polypeptide is Urocanate hydratase (Brucella ovis (strain ATCC 25840 / 63/290 / NCTC 10512)).